Reading from the N-terminus, the 153-residue chain is Ribosome maturation factor RimP (153 aa).

It belongs to the RimP family.

Its subcellular location is the cytoplasm. Required for maturation of 30S ribosomal subunits. The protein is Ribosome maturation factor RimP of Chromohalobacter salexigens (strain ATCC BAA-138 / DSM 3043 / CIP 106854 / NCIMB 13768 / 1H11).